The following is a 67-amino-acid chain: Large ribosomal subunit protein bL35 (67 aa).

This sequence belongs to the bacterial ribosomal protein bL35 family.

The protein is Large ribosomal subunit protein bL35 of Novosphingobium aromaticivorans (strain ATCC 700278 / DSM 12444 / CCUG 56034 / CIP 105152 / NBRC 16084 / F199).